Here is a 102-residue protein sequence, read N- to C-terminus: Urease subunit beta (102 aa).

This sequence belongs to the urease beta subunit family. As to quaternary structure, heterotrimer of UreA (gamma), UreB (beta) and UreC (alpha) subunits. Three heterotrimers associate to form the active enzyme.

It localises to the cytoplasm. It carries out the reaction urea + 2 H2O + H(+) = hydrogencarbonate + 2 NH4(+). It participates in nitrogen metabolism; urea degradation; CO(2) and NH(3) from urea (urease route): step 1/1. The polypeptide is Urease subunit beta (Pseudomonas syringae pv. tomato (strain ATCC BAA-871 / DC3000)).